Reading from the N-terminus, the 156-residue chain is ATP synthase subunit b (156 aa).

Residues 7-27 (LFAQIIVFFGLVWFTMKFVWP) traverse the membrane as a helical segment.

Belongs to the ATPase B chain family. In terms of assembly, F-type ATPases have 2 components, F(1) - the catalytic core - and F(0) - the membrane proton channel. F(1) has five subunits: alpha(3), beta(3), gamma(1), delta(1), epsilon(1). F(0) has three main subunits: a(1), b(2) and c(10-14). The alpha and beta chains form an alternating ring which encloses part of the gamma chain. F(1) is attached to F(0) by a central stalk formed by the gamma and epsilon chains, while a peripheral stalk is formed by the delta and b chains.

The protein resides in the cell inner membrane. In terms of biological role, f(1)F(0) ATP synthase produces ATP from ADP in the presence of a proton or sodium gradient. F-type ATPases consist of two structural domains, F(1) containing the extramembraneous catalytic core and F(0) containing the membrane proton channel, linked together by a central stalk and a peripheral stalk. During catalysis, ATP synthesis in the catalytic domain of F(1) is coupled via a rotary mechanism of the central stalk subunits to proton translocation. Functionally, component of the F(0) channel, it forms part of the peripheral stalk, linking F(1) to F(0). The protein is ATP synthase subunit b of Neisseria gonorrhoeae (strain NCCP11945).